A 168-amino-acid chain; its full sequence is Protein-export protein SecB (168 aa).

This sequence belongs to the SecB family. In terms of assembly, homotetramer, a dimer of dimers. One homotetramer interacts with 1 SecA dimer.

Its subcellular location is the cytoplasm. In terms of biological role, one of the proteins required for the normal export of preproteins out of the cell cytoplasm. It is a molecular chaperone that binds to a subset of precursor proteins, maintaining them in a translocation-competent state. It also specifically binds to its receptor SecA. The chain is Protein-export protein SecB from Rhizobium meliloti (strain 1021) (Ensifer meliloti).